The chain runs to 381 residues: Neutral protease 2 homolog mep20 (381 aa).

The N-terminal stretch at 1–19 is a signal peptide; that stretch reads MRFTALASAILPLACNVLA. Positions 20 to 193 are excised as a propeptide; that stretch reads LPAKTGEAPK…ASAVKPLDKR (174 aa). Intrachain disulfides connect Cys-199–Cys-271 and Cys-278–Cys-296. His-321 contacts Zn(2+). Glu-322 is a catalytic residue. 2 residues coordinate Zn(2+): His-325 and Asp-336.

This sequence belongs to the peptidase M35 family. Requires Zn(2+) as cofactor.

It catalyses the reaction Preferential cleavage of bonds with hydrophobic residues in P1'. Also 3-Asn-|-Gln-4 and 8-Gly-|-Ser-9 bonds in insulin B chain.. Secreted metalloproteinase that allows assimilation of proteinaceous substrates. Shows high activities on basic nuclear substrates such as histone and protamine. This is Neutral protease 2 homolog mep20 (mep20) from Aspergillus flavus.